Consider the following 567-residue polypeptide: MIFGSRRRIRGRRGRSGPMTRGLSALSRAVAVAWRRSLQLRVVALTLGLSLAVILALGFVLTSQVTNRVLDIKVRAAIDQIERARTTVSGIVNGEETRSLDSSLQLARNTLTSKTDPASGAGLAGAFDAVLMVPGDGPRAASTAGPVDQVPNALRGFVKAGQAAYQYATVQTEGFSGPALIIGTPTLSRVANLELYLIFPLASEQATITLVRGTMATGGLVLLVLLAGIALLVSRQVVVPVRSASRIAERFAEGHLSERMPVRGEDDMARLAVSFNDMAESLSRQIAQLEEFGNLQRRFTSDVSHELRTPLTTVRMAADLIYDHSADLDPTLRRSTELMVSELDRFETLLNDLLEISRHDAGVAELSVEAVDLRTTVNNALGNVGHLAEEAGIELLVDLPAEQVIAEVDARRVERILRNLIANAIDHAEHKPVRIRMAADEDTVAVTVRDYGVGLRPGEEKLVFSRFWRSDPSRVRRSGGTGLGLAISVEDARLHQGRLEAWGEPGEGACFRLTLPLVRGHKVTTSPLPMKPIPQPVLQPVAQPNPQPMPPEYKERQRPREHAEWSG.

Positions methionine 1–arginine 15 are enriched in basic residues. The disordered stretch occupies residues methionine 1–threonine 20. The next 2 helical transmembrane spans lie at valine 42–threonine 62 and glycine 213–valine 233. One can recognise an HAMP domain in the interval arginine 235–alanine 287. Residues aspartate 302 to arginine 519 form the Histidine kinase domain. Phosphohistidine; by autocatalysis is present on histidine 305. The tract at residues serine 526 to glycine 567 is disordered. Positions proline 529–proline 551 are enriched in pro residues. The segment covering glutamate 552–glycine 567 has biased composition (basic and acidic residues).

The protein localises to the cell membrane. It catalyses the reaction ATP + protein L-histidine = ADP + protein N-phospho-L-histidine.. Its function is as follows. Member of the two-component regulatory system MtrA/MtrB. Seems to function as a membrane-associated protein kinase that phosphorylates MtrA in response to environmental signals. This is Sensor histidine kinase MtrB (mtrB) from Mycobacterium bovis (strain ATCC BAA-935 / AF2122/97).